A 348-amino-acid chain; its full sequence is Centromere protein N-A (348 aa).

The protein belongs to the CENP-N/CHL4 family.

Its subcellular location is the nucleus. The protein localises to the chromosome. The protein resides in the centromere. Functionally, probable component of a centromeric complex involved in assembly of kinetochore proteins, mitotic progression and chromosome segregation. This Xenopus laevis (African clawed frog) protein is Centromere protein N-A (cenpn-a).